Consider the following 738-residue polypeptide: Polyribonucleotide nucleotidyltransferase (738 aa).

Residues Asp487 and Asp493 each contribute to the Mg(2+) site. Residues 554-613 enclose the KH domain; that stretch reads PKIVTMTINPDKIRDVIGPGGKMINSIIDQTGVKIDIEQDGTVFIASTDQEGIDLAMSMI. An S1 motif domain is found at 623 to 691; the sequence is GEVYDATVRR…DKGRVNASRK (69 aa). The disordered stretch occupies residues 704-738; the sequence is EAYEAKRKAARESRPPRDSRPPRRDGDRRPPRSTN.

This sequence belongs to the polyribonucleotide nucleotidyltransferase family. It depends on Mg(2+) as a cofactor.

It localises to the cytoplasm. It carries out the reaction RNA(n+1) + phosphate = RNA(n) + a ribonucleoside 5'-diphosphate. Its function is as follows. Involved in mRNA degradation. Catalyzes the phosphorolysis of single-stranded polyribonucleotides processively in the 3'- to 5'-direction. This is Polyribonucleotide nucleotidyltransferase from Exiguobacterium sp. (strain ATCC BAA-1283 / AT1b).